A 481-amino-acid polypeptide reads, in one-letter code: Glutamyl-tRNA(Gln) amidotransferase subunit A (481 aa).

Residues K76 and S151 each act as charge relay system in the active site. Catalysis depends on S175, which acts as the Acyl-ester intermediate.

It belongs to the amidase family. GatA subfamily. As to quaternary structure, heterotrimer of A, B and C subunits.

The catalysed reaction is L-glutamyl-tRNA(Gln) + L-glutamine + ATP + H2O = L-glutaminyl-tRNA(Gln) + L-glutamate + ADP + phosphate + H(+). In terms of biological role, allows the formation of correctly charged Gln-tRNA(Gln) through the transamidation of misacylated Glu-tRNA(Gln) in organisms which lack glutaminyl-tRNA synthetase. The reaction takes place in the presence of glutamine and ATP through an activated gamma-phospho-Glu-tRNA(Gln). This is Glutamyl-tRNA(Gln) amidotransferase subunit A from Neisseria meningitidis serogroup C (strain 053442).